We begin with the raw amino-acid sequence, 85 residues long: MRTTVSISDEILAAAKRRARERGQSLGAVIEDALRREFAAAHVGGARPTVPVFDGGTGPRRGIDLTSNRALSEVLDEGLELNSRK.

Functionally, antitoxin component of a type II toxin-antitoxin (TA) system. Upon expression in M.smegmatis neutralizes the effect of cognate toxin VapC31. This chain is Antitoxin VapB31 (vapB31), found in Mycobacterium tuberculosis (strain ATCC 25618 / H37Rv).